A 159-amino-acid chain; its full sequence is UPF0201 protein MK0399 (159 aa).

Belongs to the UPF0201 family.

This chain is UPF0201 protein MK0399, found in Methanopyrus kandleri (strain AV19 / DSM 6324 / JCM 9639 / NBRC 100938).